A 299-amino-acid chain; its full sequence is ATP phosphoribosyltransferase (299 aa).

Belongs to the ATP phosphoribosyltransferase family. Long subfamily. As to quaternary structure, equilibrium between an active dimeric form, an inactive hexameric form and higher aggregates. Interconversion between the various forms is largely reversible and is influenced by the natural substrates and inhibitors of the enzyme. Mg(2+) serves as cofactor.

The protein localises to the cytoplasm. The catalysed reaction is 1-(5-phospho-beta-D-ribosyl)-ATP + diphosphate = 5-phospho-alpha-D-ribose 1-diphosphate + ATP. The protein operates within amino-acid biosynthesis; L-histidine biosynthesis; L-histidine from 5-phospho-alpha-D-ribose 1-diphosphate: step 1/9. Feedback inhibited by histidine. Functionally, catalyzes the condensation of ATP and 5-phosphoribose 1-diphosphate to form N'-(5'-phosphoribosyl)-ATP (PR-ATP). Has a crucial role in the pathway because the rate of histidine biosynthesis seems to be controlled primarily by regulation of HisG enzymatic activity. The sequence is that of ATP phosphoribosyltransferase from Serratia proteamaculans (strain 568).